Consider the following 181-residue polypeptide: ATP-dependent protease subunit HslV (181 aa).

Residue Thr8 is part of the active site. Na(+)-binding residues include Gly165, Cys168, and Thr171.

It belongs to the peptidase T1B family. HslV subfamily. A double ring-shaped homohexamer of HslV is capped on each side by a ring-shaped HslU homohexamer. The assembly of the HslU/HslV complex is dependent on binding of ATP.

The protein resides in the cytoplasm. The enzyme catalyses ATP-dependent cleavage of peptide bonds with broad specificity.. Allosterically activated by HslU binding. In terms of biological role, protease subunit of a proteasome-like degradation complex believed to be a general protein degrading machinery. This chain is ATP-dependent protease subunit HslV, found in Oceanobacillus iheyensis (strain DSM 14371 / CIP 107618 / JCM 11309 / KCTC 3954 / HTE831).